A 440-amino-acid chain; its full sequence is Thymidine phosphorylase (440 aa).

It belongs to the thymidine/pyrimidine-nucleoside phosphorylase family. Homodimer.

The enzyme catalyses thymidine + phosphate = 2-deoxy-alpha-D-ribose 1-phosphate + thymine. Its pathway is pyrimidine metabolism; dTMP biosynthesis via salvage pathway; dTMP from thymine: step 1/2. Functionally, the enzymes which catalyze the reversible phosphorolysis of pyrimidine nucleosides are involved in the degradation of these compounds and in their utilization as carbon and energy sources, or in the rescue of pyrimidine bases for nucleotide synthesis. This chain is Thymidine phosphorylase, found in Shigella dysenteriae serotype 1 (strain Sd197).